Reading from the N-terminus, the 182-residue chain is Photosystem I assembly protein Ycf4 (182 aa).

The next 2 helical transmembrane spans lie at Trp-22–Leu-42 and Phe-66–Val-86.

This sequence belongs to the Ycf4 family.

The protein resides in the plastid. It localises to the chloroplast thylakoid membrane. Functionally, seems to be required for the assembly of the photosystem I complex. The chain is Photosystem I assembly protein Ycf4 from Tupiella akineta (Green alga).